The chain runs to 246 residues: Small ribosomal subunit protein uS3 (246 aa).

One can recognise a KH type-2 domain in the interval 19-98; the sequence is IDEWLAQNFY…NPMLDARVQA (80 aa). The disordered stretch occupies residues 218–246; sequence LQEETASTLREHMEAARPGEEHEEDREES. The segment covering 226–237 has biased composition (basic and acidic residues); that stretch reads LREHMEAARPGE.

This sequence belongs to the universal ribosomal protein uS3 family. Part of the 30S ribosomal subunit.

Functionally, binds the lower part of the 30S subunit head. The sequence is that of Small ribosomal subunit protein uS3 from Aeropyrum pernix (strain ATCC 700893 / DSM 11879 / JCM 9820 / NBRC 100138 / K1).